The primary structure comprises 90 residues: Mitochondrial import inner membrane translocase subunit Tim8 A (90 aa).

The short motif at cysteine 36–cysteine 59 is the Twin CX3C motif element. 2 disulfide bridges follow: cysteine 36-cysteine 59 and cysteine 40-cysteine 55.

This sequence belongs to the small Tim family. Heterohexamer; composed of 3 copies of TIMM8A and 3 copies of TIMM13, named soluble 70 kDa complex. Associates with the TIM22 complex, whose core is composed of TIMM22.

Its subcellular location is the mitochondrion inner membrane. Functionally, mitochondrial intermembrane chaperone that participates in the import and insertion of some multi-pass transmembrane proteins into the mitochondrial inner membrane. Also required for the transfer of beta-barrel precursors from the TOM complex to the sorting and assembly machinery (SAM complex) of the outer membrane. Acts as a chaperone-like protein that protects the hydrophobic precursors from aggregation and guide them through the mitochondrial intermembrane space. The TIMM8-TIMM13 complex mediates the import of some proteins while the predominant TIMM9-TIMM10 70 kDa complex mediates the import of much more proteins. This is Mitochondrial import inner membrane translocase subunit Tim8 A (timm8a) from Takifugu rubripes (Japanese pufferfish).